Here is a 414-residue protein sequence, read N- to C-terminus: Serine/threonine-protein kinase 32B (414 aa).

The region spanning 23 to 283 (FQILRAIGKG…LHDIQSVPYL (261 aa)) is the Protein kinase domain. Residues 29–37 (IGKGSFGKV) and K52 each bind ATP. D146 acts as the Proton acceptor in catalysis. Residues 374 to 396 (QGQGSQLLDTDSRGGGQAQSKLQ) form a disordered region.

Belongs to the protein kinase superfamily. Ser/Thr protein kinase family. The cofactor is Mg(2+).

The enzyme catalyses L-seryl-[protein] + ATP = O-phospho-L-seryl-[protein] + ADP + H(+). The catalysed reaction is L-threonyl-[protein] + ATP = O-phospho-L-threonyl-[protein] + ADP + H(+). The chain is Serine/threonine-protein kinase 32B from Homo sapiens (Human).